The chain runs to 477 residues: Mitochondrial adenyl nucleotide antiporter SLC25A24 (477 aa).

The regulatory N-terminal domain stretch occupies residues 1–173 (MLRWLRGFVL…RFWKHSTGID (173 aa)). Residues 1 to 197 (MLRWLRGFVL…EKKSGQWWRQ (197 aa)) lie on the Mitochondrial intermembrane side of the membrane. EF-hand domains follow at residues 19–54 (EPPTRYETLFQKLDRNGDGVVDISELQEGLKSLGIP), 61–85 (EKIFTTGDVNKDGKLDFEEFMKYLK), 86–121 (DHEKKMKLAFKSLDKNNDGKIEASEIVQSLQILGLT), and 122–157 (ISEQQAELILQSIDADGTMTVDWNEWRDYFLFNPVT). Positions 32, 34, 36, 38, 43, 68, 70, 72, 74, 79, 99, 101, 103, 105, 110, 135, 137, 139, 141, and 146 each coordinate Ca(2+). Positions 159–168 (IEEIIRFWKH) are linker region. The C-terminal transmembrane transporter domain stretch occupies residues 174–477 (IGDSLTIPDE…MKQTLGVTQK (304 aa)). Solcar repeat units lie at residues 192–278 (GQWW…YKKL), 286–371 (IGTF…LKSH), and 383–471 (PGVM…MKQT). The chain crosses the membrane as a helical span at residues 198–215 (LLAGGVAGAVSRTSTAPL). The Mitochondrial matrix segment spans residues 216–252 (DRLKVMMQVHGSKSAKMNIYGGFQQMVKEGGIRSLWR). A helical transmembrane segment spans residues 253-272 (GNGTNVIKIAPETAVKFWAY). Over 273–295 (EQYKKLLTEEGQKIGTFERFVSG) the chain is Mitochondrial intermembrane. The chain crosses the membrane as a helical span at residues 296–309 (SMAGATAQTFIYPM). The Mitochondrial matrix portion of the chain corresponds to 310–345 (EVLKTRLAVGKTGQYSGMFDCAKKILKYEGMGAFYK). Lys320 bears the N6-acetyllysine; alternate mark. The residue at position 320 (Lys320) is an N6-succinyllysine; alternate. Lys336 bears the N6-acetyllysine mark. A helical transmembrane segment spans residues 346-365 (GYVPNLLGIIPYAGIDLAVY). At 366-388 (ELLKSHWLDNFAKDSVNPGVMVL) the chain is on the mitochondrial intermembrane side. Residues 389–406 (LGCGALSSTCGQLASYPL) form a helical membrane-spanning segment. Residues 407 to 445 (ALVRTRMQAQAMIEKSPQLNMVGLFRRILSKEGLPGLYR) lie on the Mitochondrial matrix side of the membrane. Residue Lys437 is modified to N6-acetyllysine; alternate. Lys437 carries the post-translational modification N6-succinyllysine; alternate. The chain crosses the membrane as a helical span at residues 446–465 (GITPNFMKVLPAVGISYVVY). Residues 466–477 (ENMKQTLGVTQK) lie on the Mitochondrial intermembrane side of the membrane.

Belongs to the mitochondrial carrier (TC 2.A.29) family. Monomer.

It is found in the mitochondrion inner membrane. It carries out the reaction Mg(2+)(out) + phosphate(in) + ATP(out) = Mg(2+)(in) + phosphate(out) + ATP(in). It catalyses the reaction ADP(out) + phosphate(in) + H(+)(out) = ADP(in) + phosphate(out) + H(+)(in). The catalysed reaction is AMP(out) + phosphate(in) = AMP(in) + phosphate(out). The enzyme catalyses phosphate(in) + ATP(out) + 2 H(+)(out) = phosphate(out) + ATP(in) + 2 H(+)(in). It carries out the reaction dADP(in) + ADP(out) = dADP(out) + ADP(in). It catalyses the reaction Mg(2+)(in) + ADP(out) + ATP(in) + H(+)(out) = Mg(2+)(out) + ADP(in) + ATP(out) + H(+)(in). The catalysed reaction is ADP(out) + diphosphate(in) = ADP(in) + diphosphate(out). The enzyme catalyses dAMP(in) + ADP(out) + H(+)(out) = dAMP(out) + ADP(in) + H(+)(in). It carries out the reaction 3'-AMP(in) + ADP(out) + H(+)(out) = 3'-AMP(out) + ADP(in) + H(+)(in). It catalyses the reaction dAMP(out) + phosphate(in) = dAMP(in) + phosphate(out). The catalysed reaction is 3'-AMP(out) + phosphate(in) = 3'-AMP(in) + phosphate(out). The enzyme catalyses dADP(out) + phosphate(in) + H(+)(out) = dADP(in) + phosphate(out) + H(+)(in). Activated by an increase in cytosolic calcium levels that induce a conformational change of the N-terminal regulatory domain, uncapping the channel and allowing transport. Inhibited by bathophenanthroline, mersalyl, p-hydroxymercuribenzoate, bromcresol purple and tannic acid. Electroneutral antiporter that mediates the transport of adenyl nucleotides through the inner mitochondrial membrane. Originally identified as an ATP-magnesium/inorganic phosphate antiporter, it also acts as a broad specificity adenyl nucleotide antiporter. By regulating the mitochondrial matrix adenyl nucleotide pool could adapt to changing cellular energetic demands and indirectly regulate adenyl nucleotide-dependent metabolic pathways. In vitro, a low activity is also observed with guanyl and pyrimidine nucleotides. May play a role in protecting cells against oxidative stress-induced cell death, by buffering calcium levels in the mitochondrial matrix through the formation of calcium-phosphate precipitates. The chain is Mitochondrial adenyl nucleotide antiporter SLC25A24 (SLC25A24) from Bos taurus (Bovine).